Consider the following 2135-residue polypeptide: Nonribosomal peptide synthetase gliP (2135 aa).

Positions 34–424 are adenylation 1; sequence TYTELDVASS…LPADVEEPLR (391 aa). A Carrier 1 domain is found at 519–594; the sequence is TEREQVIAEC…GILPYARDLA (76 aa). Ser-555 carries the post-translational modification O-(pantetheine 4'-phosphoryl)serine. Positions 663-913 are condensation 1; the sequence is AEHICNAWRQ…MATLPLVCRI (251 aa). The segment at 1078 to 1458 is adenylation 2; sequence YRELDQKSNA…YQEEPRLTQA (381 aa). The 79-residue stretch at 1544 to 1622 folds into the Carrier 2 domain; it reads ASIADGIATL…EQVELVRRKR (79 aa). An O-(pantetheine 4'-phosphoryl)serine modification is found at Ser-1582. A condensation 2 region spans residues 1642-1905; it reads SPLERQTWFQ…FLDRLPLRFK (264 aa). One can recognise a Carrier 3 domain in the interval 2061–2134; sequence RRLVGILQRE…DLAQRLYRQV (74 aa). Ser-2095 is modified (O-(pantetheine 4'-phosphoryl)serine).

The protein belongs to the NRP synthetase family.

Its pathway is mycotoxin biosynthesis. Nonribosomal peptide synthetase; part of the gene cluster that mediates the biosynthesis of gliotoxin, a member of the epipolythiodioxopiperazine (ETP) class of toxins characterized by a disulfide-bridged cyclic dipeptide. The first step in gliotoxin biosynthesis is the condensation of serine and phenylalanine to form the cyclo-L-phenylalanyl-L-serine diketopiperazine (DKP) by the NRPS gliP. GliP is also able to produce the DKP cyclo-L-tryptophanyl-L-serine, suggesting that the substrate specificity of the first adenylation (A) domain in gliP is sufficiently relaxed to accommodate both L-Phe and L-Trp. The cytochrome P450 monooxygenase gliC has been shown to catalyze the subsequent hydroxylation of the alpha-carbon of L-Phe in cyclo-L-phenylalanyl-L-serine whereas the second cytochrome P450 enzyme, gliF, is presumably involved in the modification of the DKP side chain. The glutathione S-transferase (GST) gliG then forms a bis-glutathionylated biosynthetic intermediate which is responsible for the sulfurization of gliotoxin. This bis-glutathionylated intermediate is subsequently processed by the gamma-glutamyl cyclotransferase gliK to remove both gamma-glutamyl moieties. Subsequent processing via gliI yields a biosynthetic intermediate, which is N-methylated via the N-methyltransferase gliN, before the gliotoxin oxidoreductase gliT-mediated disulfide bridge closure. GliN-mediated amide methylation confers stability to ETP, damping the spontaneous formation of tri- and tetrasulfides. Intracellular dithiol gliotoxin oxidized by gliT is subsequently effluxed by gliA. Gliotoxin contributes to pathogenesis during invasive aspergillosis. In macrophages and neutrophils, gliotoxin showed inhibition of various different cell functions including cytokine production, antigen presentation, phagocytosis, and production of reactive oxygen species. The polypeptide is Nonribosomal peptide synthetase gliP (Aspergillus fumigatus (strain ATCC MYA-4609 / CBS 101355 / FGSC A1100 / Af293) (Neosartorya fumigata)).